The sequence spans 132 residues: Large ribosomal subunit protein bL12 (132 aa).

A compositionally biased stretch (basic and acidic residues) spans 102 to 126; that stretch reads APKPIKEATNKDDAESIKKQLEEAG. A disordered region spans residues 102-132; that stretch reads APKPIKEATNKDDAESIKKQLEEAGAKASVK.

The protein belongs to the bacterial ribosomal protein bL12 family. In terms of assembly, homodimer. Part of the ribosomal stalk of the 50S ribosomal subunit. Forms a multimeric L10(L12)X complex, where L10 forms an elongated spine to which 2 to 4 L12 dimers bind in a sequential fashion. Binds GTP-bound translation factors.

Its function is as follows. Forms part of the ribosomal stalk which helps the ribosome interact with GTP-bound translation factors. Is thus essential for accurate translation. This Rippkaea orientalis (strain PCC 8801 / RF-1) (Cyanothece sp. (strain PCC 8801)) protein is Large ribosomal subunit protein bL12.